Consider the following 213-residue polypeptide: Uridine kinase (213 aa).

An ATP-binding site is contributed by Gly-14–Ser-21.

Belongs to the uridine kinase family.

Its subcellular location is the cytoplasm. The enzyme catalyses uridine + ATP = UMP + ADP + H(+). It catalyses the reaction cytidine + ATP = CMP + ADP + H(+). Its pathway is pyrimidine metabolism; CTP biosynthesis via salvage pathway; CTP from cytidine: step 1/3. It functions in the pathway pyrimidine metabolism; UMP biosynthesis via salvage pathway; UMP from uridine: step 1/1. This is Uridine kinase from Vibrio cholerae serotype O1 (strain ATCC 39315 / El Tor Inaba N16961).